Reading from the N-terminus, the 474-residue chain is Sporulation-specific protein 6 (474 aa).

The 54-residue stretch at 125–178 (RLAFPNFIFYFDNVDEEIKRRVTQKINNLGAKVATLFTFEVTHFITTRTTDPEM) folds into the BRCT domain. A DBF4-type zinc finger spans residues 421–470 (IETKSGYCENCCERYKDLERHLGGKHHRRFAEKDENFQGLDDLFLLIRRP). Zn(2+)-binding residues include C428, C431, H441, and H447.

Its subcellular location is the nucleus. May act as a kinase regulator. Essential for progression of meiosis II and sporulation. This is Sporulation-specific protein 6 (spo6) from Schizosaccharomyces pombe (strain 972 / ATCC 24843) (Fission yeast).